Reading from the N-terminus, the 259-residue chain is uncharacterized protein (259 aa).

The active site involves Glu46.

It belongs to the PhzF family.

This is an uncharacterized protein from Pseudomonas aeruginosa (strain ATCC 15692 / DSM 22644 / CIP 104116 / JCM 14847 / LMG 12228 / 1C / PRS 101 / PAO1).